Consider the following 825-residue polypeptide: Tuftelin-interacting protein 11 (825 aa).

A disordered region spans residues 1-135 (MSMSHLYGKD…RTFAGGIKSN (135 aa)). Acidic residues predominate over residues 11–25 (EDSDGVEMENFEITD). 2 stretches are compositionally biased toward basic and acidic residues: residues 41–61 (QTKEEATYGMWAERDSDDERP) and 85–114 (PAAEEKSDSDSDSETQARRETFPKDFEAKK). Residues 122 to 135 (KPSQRTFAGGIKSN) are compositionally biased toward polar residues. The 47-residue stretch at 145–191 (TKGIGQKLLQKMGYVQGRGLGKNAQGIIAPIEAKQRKGKGAVGAYGS) folds into the G-patch domain.

This sequence belongs to the TFP11/STIP family. Identified in the spliceosome C complex.

Its subcellular location is the nucleus. Involved in pre-mRNA splicing, specifically in spliceosome disassembly during late-stage splicing events. The sequence is that of Tuftelin-interacting protein 11 (tfip11) from Xenopus tropicalis (Western clawed frog).